We begin with the raw amino-acid sequence, 617 residues long: DNA mismatch repair protein MutL (617 aa).

The protein belongs to the DNA mismatch repair MutL/HexB family.

Its function is as follows. This protein is involved in the repair of mismatches in DNA. It is required for dam-dependent methyl-directed DNA mismatch repair. May act as a 'molecular matchmaker', a protein that promotes the formation of a stable complex between two or more DNA-binding proteins in an ATP-dependent manner without itself being part of a final effector complex. This Bartonella tribocorum (strain CIP 105476 / IBS 506) protein is DNA mismatch repair protein MutL.